The primary structure comprises 127 residues: Nuclear transport factor 2 (127 aa).

The region spanning 11-124 (VGKQFVEHYY…FLLINDFFRL (114 aa)) is the NTF2 domain.

It is found in the cytoplasm. The protein resides in the cytosol. Its subcellular location is the nucleus outer membrane. The protein localises to the nucleus. It localises to the nuclear pore complex. It is found in the nucleus inner membrane. The protein resides in the nucleoplasm. In terms of biological role, mediates the import of GDP-bound RAN from the cytoplasm into the nucleus which is essential for the function of RAN in cargo receptor-mediated nucleocytoplasmic transport. Thereby, plays indirectly a more general role in cargo receptor-mediated nucleocytoplasmic transport. Interacts with GDP-bound RAN in the cytosol, recruits it to the nuclear pore complex via its interaction with nucleoporins and promotes its nuclear import. This Dictyostelium discoideum (Social amoeba) protein is Nuclear transport factor 2.